A 463-amino-acid polypeptide reads, in one-letter code: MENTLVKSLYRDTDKYAGQTVQVSGWIRNLRDSKAFGFIELNDGSFFKSVQIVFDTELDNFKEIAKLPLSSSVKVEGKVIATPGAKQPFEIKAEKIDIEGLSDSDYPLQKKRHTFEYLRTIAHLRPRTNAFSATFRVRSIAAFAIHQFFQERGFVHVHTPIITGSDTEGAGEMFRVTTQDLNNVPKDEDGQVDESKDFFGKETNLTVSGQLNAEAYALAFRDVYTFGPTFRAENSNTTRHAAEFWMVEPEIAFAELGDVMNLTEDMLKYAMKYVLEHAPEEMEFFNSFVDKTVLERMNNVINSDFGRITYTEAIKVLQESGADFKYPVEWGIDLQTEHERYLSEEIFKRPVFVTDYPKDIKAFYMRLNDDGKTVAATDLLVPGIGELIGGSQREERMDVLVDRIKELGMNEEDYWWYLELRKYGGTKHAGFGLGFERFLMYITGMANIRDVIPFPRTPGSSEF.

Belongs to the class-II aminoacyl-tRNA synthetase family. In terms of assembly, homodimer.

It is found in the cytoplasm. It carries out the reaction tRNA(Asn) + L-asparagine + ATP = L-asparaginyl-tRNA(Asn) + AMP + diphosphate + H(+). The polypeptide is Asparagine--tRNA ligase (Bacillus thuringiensis subsp. konkukian (strain 97-27)).